We begin with the raw amino-acid sequence, 418 residues long: Probable carboxypeptidase AFLA_000940 (418 aa).

Residues 1–18 (MKATDLFHVTVLVAGALA) form the signal peptide. Asn-74 is a glycosylation site (N-linked (GlcNAc...) asparagine). Position 147 (Asp-147) interacts with Zn(2+). Residue Asn-168 is glycosylated (N-linked (GlcNAc...) asparagine). Glu-179 acts as the Proton acceptor in catalysis. Position 180 (Glu-180) interacts with Zn(2+).

The protein belongs to the peptidase M20A family. Zn(2+) is required as a cofactor.

The protein localises to the secreted. The polypeptide is Probable carboxypeptidase AFLA_000940 (Aspergillus flavus (strain ATCC 200026 / FGSC A1120 / IAM 13836 / NRRL 3357 / JCM 12722 / SRRC 167)).